We begin with the raw amino-acid sequence, 172 residues long: Disulfide bond formation protein B (172 aa).

Topologically, residues 1–11 (MNPFRWSFRAQ) are cytoplasmic. A helical transmembrane segment spans residues 12–28 (FLLGFLACAGLLAYAIY). The Periplasmic portion of the chain corresponds to 29–46 (VQLHLGLEPCPLCIFQRI). A disulfide bridge links C38 with C41. The helical transmembrane segment at 47–63 (AFAALAVFFLLGALHGP) threads the bilayer. Over 64 to 70 (RAAAGRK) the chain is Cytoplasmic. Residues 71–88 (VYGVLSFIAAGVGMGIAA) traverse the membrane as a helical segment. The Periplasmic segment spans residues 89 to 145 (RHVWVQIRPKDMMSSCGPPLSFLSETMGPFEVFRTVLTGTGDCGNIDWRFLGLSMPM). C104 and C131 are disulfide-bonded. The chain crosses the membrane as a helical span at residues 146 to 164 (WSMVWFVGLALWALYAGFK). Residues 165–172 (VRRSSVHH) are Cytoplasmic-facing.

Belongs to the DsbB family.

It localises to the cell inner membrane. In terms of biological role, required for disulfide bond formation in some periplasmic proteins. Acts by oxidizing the DsbA protein. In Xanthomonas axonopodis pv. citri (strain 306), this protein is Disulfide bond formation protein B.